The sequence spans 378 residues: Beta-1,3-galactosyltransferase pvg3 (378 aa).

At 1-8 the chain is on the cytoplasmic side; the sequence is MFSNSKKK. The helical; Signal-anchor for type II membrane protein transmembrane segment at 9-29 threads the bilayer; that stretch reads IFLYVLIAGVATFSFAFLVLN. Topologically, residues 30–378 are lumenal; that stretch reads RLQAEEHSLA…ATIPLPSLDV (349 aa). Asn53, Asn97, Asn180, and Asn354 each carry an N-linked (GlcNAc...) asparagine glycan.

Belongs to the glycosyltransferase 31 family.

It localises to the endoplasmic reticulum membrane. The protein resides in the golgi apparatus. The protein localises to the golgi stack membrane. It catalyses the reaction 3-O-(beta-D-galactosyl-(1-&gt;4)-beta-D-xylosyl)-L-seryl-[protein] + UDP-alpha-D-galactose = 3-O-(beta-D-galactosyl-(1-&gt;3)-beta-D-galactosyl-(1-&gt;4)-beta-D-xylosyl)-L-seryl-[protein] + UDP + H(+). Its function is as follows. Involved in cell wall biogenesis. Has a role in the addition of Gal-beta1,3 moeities to galactomannans and their subsequent pyruvylation. Has a role in meiosis. The sequence is that of Beta-1,3-galactosyltransferase pvg3 (pvg3) from Schizosaccharomyces pombe (strain 972 / ATCC 24843) (Fission yeast).